Consider the following 236-residue polypeptide: Peptidase E (236 aa).

Residues Ser122, Asp137, and His159 each act as charge relay system in the active site.

Belongs to the peptidase S51 family.

It localises to the cytoplasm. It carries out the reaction Dipeptidase E catalyzes the hydrolysis of dipeptides Asp-|-Xaa. It does not act on peptides with N-terminal Glu, Asn or Gln, nor does it cleave isoaspartyl peptides.. In terms of biological role, hydrolyzes dipeptides containing N-terminal aspartate residues. May play a role in allowing the cell to use peptide aspartate to spare carbon otherwise required for the synthesis of the aspartate family of amino acids. In Shewanella sp. (strain MR-4), this protein is Peptidase E.